Consider the following 446-residue polypeptide: UDP-N-acetylmuramoylalanine--D-glutamate ligase (446 aa).

115–121 (GTNGKTT) lines the ATP pocket.

The protein belongs to the MurCDEF family.

The protein resides in the cytoplasm. It catalyses the reaction UDP-N-acetyl-alpha-D-muramoyl-L-alanine + D-glutamate + ATP = UDP-N-acetyl-alpha-D-muramoyl-L-alanyl-D-glutamate + ADP + phosphate + H(+). Its pathway is cell wall biogenesis; peptidoglycan biosynthesis. Cell wall formation. Catalyzes the addition of glutamate to the nucleotide precursor UDP-N-acetylmuramoyl-L-alanine (UMA). In Trichlorobacter lovleyi (strain ATCC BAA-1151 / DSM 17278 / SZ) (Geobacter lovleyi), this protein is UDP-N-acetylmuramoylalanine--D-glutamate ligase.